The following is a 21-amino-acid chain: Bibrotoxin (21 aa).

Cystine bridges form between Cys-1–Cys-15 and Cys-3–Cys-11.

It belongs to the endothelin/sarafotoxin family. As to expression, expressed by the venom gland.

Its subcellular location is the secreted. Its function is as follows. Vasoconstrictor activity. These toxins cause cardiac arrest probably as a result of coronary vasospasm. May act by displaying agonistic activities towards endothelin-1 and -2 receptors (EDNRA and EDNRB). This chain is Bibrotoxin, found in Atractaspis bibronii (Bibron's mole viper).